We begin with the raw amino-acid sequence, 421 residues long: Gamma-glutamyl phosphate reductase (421 aa).

This sequence belongs to the gamma-glutamyl phosphate reductase family.

The protein resides in the cytoplasm. It catalyses the reaction L-glutamate 5-semialdehyde + phosphate + NADP(+) = L-glutamyl 5-phosphate + NADPH + H(+). Its pathway is amino-acid biosynthesis; L-proline biosynthesis; L-glutamate 5-semialdehyde from L-glutamate: step 2/2. Catalyzes the NADPH-dependent reduction of L-glutamate 5-phosphate into L-glutamate 5-semialdehyde and phosphate. The product spontaneously undergoes cyclization to form 1-pyrroline-5-carboxylate. The polypeptide is Gamma-glutamyl phosphate reductase (Brucella abortus (strain 2308)).